The chain runs to 968 residues: RNA polymerase-associated protein RapA (968 aa).

The 170-residue stretch at 163-332 folds into the Helicase ATP-binding domain; that stretch reads EVGQRFAPRV…FARLRLLDPD (170 aa). 176-183 is an ATP binding site; it reads DEVGLGKT. Residues 278–281 carry the DEAH box motif; the sequence is DEAH. The Helicase C-terminal domain maps to 491 to 645; sequence RVDWLIDFLK…TCPTGHILFN (155 aa).

Belongs to the SNF2/RAD54 helicase family. RapA subfamily. As to quaternary structure, interacts with the RNAP. Has a higher affinity for the core RNAP than for the holoenzyme. Its ATPase activity is stimulated by binding to RNAP.

In terms of biological role, transcription regulator that activates transcription by stimulating RNA polymerase (RNAP) recycling in case of stress conditions such as supercoiled DNA or high salt concentrations. Probably acts by releasing the RNAP, when it is trapped or immobilized on tightly supercoiled DNA. Does not activate transcription on linear DNA. Probably not involved in DNA repair. The sequence is that of RNA polymerase-associated protein RapA from Shewanella loihica (strain ATCC BAA-1088 / PV-4).